Reading from the N-terminus, the 292-residue chain is High-affinity heme uptake system protein IsdE (292 aa).

Positions 1 to 19 are cleaved as a signal peptide; that stretch reads MRIIKYLTILVISVVILTS. Cys20 carries N-palmitoyl cysteine lipidation. Cys20 carries the S-diacylglycerol cysteine lipid modification. A Fe/B12 periplasmic-binding domain is found at 35–291; sequence RIVPTTVALT…QLYDLFYKDK (257 aa). The heme site is built by Val41, Ala42, Ser60, Tyr61, Met78, and His229.

This sequence belongs to the bacterial solute-binding protein 8 family. It depends on heme b as a cofactor.

It is found in the cell membrane. Involved in heme (porphyrin) scavenging. Binds Fe(2+) and Fe(3+) heme but the largest fraction is Fe(2+) heme. Functions as a high-affinity heme binding protein and probably has a role in relaying heme-iron from cell wall-anchored isd proteins receptors to the probable permease IsdF. The chain is High-affinity heme uptake system protein IsdE (isdE) from Staphylococcus aureus (strain MRSA252).